The sequence spans 474 residues: Glutamate--tRNA ligase (474 aa).

The short motif at P9 to G19 is the 'HIGH' region element. The 'KMSKS' region motif lies at K238 to R242. K241 provides a ligand contact to ATP.

It belongs to the class-I aminoacyl-tRNA synthetase family. Glutamate--tRNA ligase type 1 subfamily. As to quaternary structure, monomer.

It localises to the cytoplasm. The enzyme catalyses tRNA(Glu) + L-glutamate + ATP = L-glutamyl-tRNA(Glu) + AMP + diphosphate. Catalyzes the attachment of glutamate to tRNA(Glu) in a two-step reaction: glutamate is first activated by ATP to form Glu-AMP and then transferred to the acceptor end of tRNA(Glu). The polypeptide is Glutamate--tRNA ligase (Buchnera aphidicola subsp. Cinara cedri (strain Cc)).